The following is a 69-amino-acid chain: Ferredoxin-1 (69 aa).

[3Fe-4S] cluster contacts are provided by C12, C18, and C57.

Requires [3Fe-4S] cluster as cofactor.

In terms of biological role, electron transport protein for the cytochrome P-450-SU1 system. The polypeptide is Ferredoxin-1 (suaB) (Streptomyces griseolus).